Consider the following 579-residue polypeptide: UPF0324 membrane protein DVU_2133 (579 aa).

Transmembrane regions (helical) follow at residues 26 to 45 (YWAIWLGFVILIAGMWLFLA), 193 to 215 (PFNIATSLPMLMVALGLFFAVGM), 225 to 243 (FLVGFIGVFFVAVLALMMG), 250 to 272 (YWGIGAEAWAIIIGMLVANTVGT), 305 to 327 (IGIPGIFVAWVVTPIVLICTFIF), 369 to 391 (LTLAIGLSLVFTAIMMIAMPAFI), 401 to 423 (GGAWMGGTIDATGAVAAAGAFLG), 436 to 456 (IQNVLIGVVAFGVAVYWCARV), 476 to 495 (FVLGFLAASVLFSVISGSLG), 515 to 534 (LRNWFFCLAFTSIGLATNFR), and 549 to 571 (YVAGQSFNLVLTLAMAYVMFYIV).

Belongs to the UPF0324 family.

It is found in the cell membrane. This Nitratidesulfovibrio vulgaris (strain ATCC 29579 / DSM 644 / CCUG 34227 / NCIMB 8303 / VKM B-1760 / Hildenborough) (Desulfovibrio vulgaris) protein is UPF0324 membrane protein DVU_2133.